Reading from the N-terminus, the 407-residue chain is S-adenosylmethionine synthase (407 aa).

His-19 serves as a coordination point for ATP. Residue Asp-21 coordinates Mg(2+). Glu-47 is a binding site for K(+). Positions 60 and 103 each coordinate L-methionine. The flexible loop stretch occupies residues 103-113 (QSQEIADGVDT). The tract at residues 108 to 131 (ADGVDTSQEARGDGHFEEDDRAGA) is disordered. Residues 178-180 (DGK), Asp-258, 264-265 (RK), Ala-281, and Lys-285 contribute to the ATP site. Asp-258 serves as a coordination point for L-methionine. Lys-289 is a binding site for L-methionine.

The protein belongs to the AdoMet synthase family. As to quaternary structure, homotetramer; dimer of dimers. Mg(2+) serves as cofactor. Requires K(+) as cofactor.

The protein localises to the cytoplasm. The catalysed reaction is L-methionine + ATP + H2O = S-adenosyl-L-methionine + phosphate + diphosphate. The protein operates within amino-acid biosynthesis; S-adenosyl-L-methionine biosynthesis; S-adenosyl-L-methionine from L-methionine: step 1/1. Functionally, catalyzes the formation of S-adenosylmethionine (AdoMet) from methionine and ATP. The overall synthetic reaction is composed of two sequential steps, AdoMet formation and the subsequent tripolyphosphate hydrolysis which occurs prior to release of AdoMet from the enzyme. The sequence is that of S-adenosylmethionine synthase from Corynebacterium efficiens (strain DSM 44549 / YS-314 / AJ 12310 / JCM 11189 / NBRC 100395).